We begin with the raw amino-acid sequence, 61 residues long: Sec-independent protein translocase protein TatA (61 aa).

The chain crosses the membrane as a helical span at residues 1–21 (MFSNIGFPGLILILVAVLILF).

Belongs to the TatA/E family. Forms a complex with TatC.

The protein localises to the cell membrane. Part of the twin-arginine translocation (Tat) system that transports large folded proteins containing a characteristic twin-arginine motif in their signal peptide across membranes. TatA could form the protein-conducting channel of the Tat system. In Bacillus anthracis (strain A0248), this protein is Sec-independent protein translocase protein TatA.